Reading from the N-terminus, the 370-residue chain is 3-isopropylmalate dehydrogenase (370 aa).

76–89 (GPKWDQNPSELRPE) contacts NAD(+). Positions 96, 106, 134, and 224 each coordinate substrate. Residues D224, D248, and D252 each coordinate Mg(2+). 282–294 (GSAPDIAGQNIAN) serves as a coordination point for NAD(+).

This sequence belongs to the isocitrate and isopropylmalate dehydrogenases family. LeuB type 1 subfamily. Homodimer. It depends on Mg(2+) as a cofactor. The cofactor is Mn(2+).

It is found in the cytoplasm. It carries out the reaction (2R,3S)-3-isopropylmalate + NAD(+) = 4-methyl-2-oxopentanoate + CO2 + NADH. It participates in amino-acid biosynthesis; L-leucine biosynthesis; L-leucine from 3-methyl-2-oxobutanoate: step 3/4. Functionally, catalyzes the oxidation of 3-carboxy-2-hydroxy-4-methylpentanoate (3-isopropylmalate) to 3-carboxy-4-methyl-2-oxopentanoate. The product decarboxylates to 4-methyl-2 oxopentanoate. This chain is 3-isopropylmalate dehydrogenase, found in Bacillus licheniformis (strain ATCC 14580 / DSM 13 / JCM 2505 / CCUG 7422 / NBRC 12200 / NCIMB 9375 / NCTC 10341 / NRRL NRS-1264 / Gibson 46).